The following is a 135-amino-acid chain: Small ribosomal subunit protein uS12 (135 aa).

A 3-methylthioaspartic acid modification is found at Asp-89. The tract at residues 108–135 is disordered; sequence NKRTVSRSKYGTKKAKATDKKATDSKKK. A compositionally biased stretch (basic residues) spans 111–122; that stretch reads TVSRSKYGTKKA. A compositionally biased stretch (basic and acidic residues) spans 123–135; the sequence is KATDKKATDSKKK.

Belongs to the universal ribosomal protein uS12 family. As to quaternary structure, part of the 30S ribosomal subunit. Contacts proteins S8 and S17. May interact with IF1 in the 30S initiation complex.

In terms of biological role, with S4 and S5 plays an important role in translational accuracy. Functionally, interacts with and stabilizes bases of the 16S rRNA that are involved in tRNA selection in the A site and with the mRNA backbone. Located at the interface of the 30S and 50S subunits, it traverses the body of the 30S subunit contacting proteins on the other side and probably holding the rRNA structure together. The combined cluster of proteins S8, S12 and S17 appears to hold together the shoulder and platform of the 30S subunit. The sequence is that of Small ribosomal subunit protein uS12 from Helicobacter pylori (strain HPAG1).